A 123-amino-acid polypeptide reads, in one-letter code: UPF0738 protein BCE33L1094 (123 aa).

Belongs to the UPF0738 family.

The sequence is that of UPF0738 protein BCE33L1094 from Bacillus cereus (strain ZK / E33L).